A 252-amino-acid chain; its full sequence is Chitooligosaccharide deacetylase (252 aa).

Residues H61 and H125 each contribute to the Mg(2+) site.

This sequence belongs to the YdjC deacetylase family. ChbG subfamily. Homodimer. Requires Mg(2+) as cofactor.

The protein resides in the cytoplasm. The enzyme catalyses N,N'-diacetylchitobiose + H2O = N-acetyl-beta-D-glucosaminyl-(1-&gt;4)-D-glucosamine + acetate. It carries out the reaction diacetylchitobiose-6'-phosphate + H2O = N'-monoacetylchitobiose-6'-phosphate + acetate. Its pathway is glycan degradation; chitin degradation. Involved in the degradation of chitin. ChbG is essential for growth on the acetylated chitooligosaccharides chitobiose and chitotriose but is dispensable for growth on cellobiose and chitosan dimer, the deacetylated form of chitobiose. Deacetylation of chitobiose-6-P and chitotriose-6-P is necessary for both the activation of the chb promoter by the regulatory protein ChbR and the hydrolysis of phosphorylated beta-glucosides by the phospho-beta-glucosidase ChbF. Catalyzes the removal of only one acetyl group from chitobiose-6-P to yield monoacetylchitobiose-6-P, the inducer of ChbR and the substrate of ChbF. The polypeptide is Chitooligosaccharide deacetylase (Shigella flexneri serotype 5b (strain 8401)).